The following is a 1218-amino-acid chain: Protein dispatched (1218 aa).

Residues 21–41 (YLVVVSIAVYCVACIIVALVL) form a helical membrane-spanning segment. The tract at residues 99–135 (VETKLHPNHRRRKNKHKNRNKNKRRKEQNQSSHEHHD) is disordered. Basic residues predominate over residues 104–124 (HPNHRRRKNKHKNRNKNKRRK). Residues asparagine 127, asparagine 176, asparagine 197, asparagine 264, asparagine 319, and asparagine 388 are each glycosylated (N-linked (GlcNAc...) asparagine). Residues 430-624 (AMDLGLENEL…ITWLPASVSI (195 aa)) form the SSD domain. 6 helical membrane passes run 443–463 (LLLT…ASVW), 473–493 (LMSC…YAIV), 504–524 (LLAV…FLKI), 570–590 (AAAS…ASYS), 598–618 (CFGI…ITWL), and 670–690 (AYLW…IVFW). Residues asparagine 767, asparagine 883, and asparagine 891 are each glycosylated (N-linked (GlcNAc...) asparagine). 5 helical membrane passes run 975–995 (LAVL…VLTV), 996–1016 (SLSI…LNIL), 1019–1039 (IAVS…GIHY), 1058–1078 (IIGP…IMMA), and 1087–1107 (IGVF…FFLM).

This sequence belongs to the dispatched family.

Its subcellular location is the membrane. Functionally, segment polarity protein which functions in hedgehog (Hh) signaling. Regulates the trafficking and the release of cholesterol-modified hedgehog protein from cells of the posterior compartment (P cells) and is hence required for the effective production of the Hh signal. In Drosophila melanogaster (Fruit fly), this protein is Protein dispatched (disp).